A 365-amino-acid chain; its full sequence is Glycine oxidase (365 aa).

FAD contacts are provided by residues 12–13 (VI), 32–33 (DQ), 40–41 (SS), 45–47 (GGI), and isoleucine 173. Residue arginine 302 participates in substrate binding. An FAD-binding site is contributed by 327–333 (HYRNGLV).

It belongs to the DAO family. ThiO subfamily. As to quaternary structure, monomer. FAD is required as a cofactor.

The catalysed reaction is glycine + O2 + H2O = glyoxylate + H2O2 + NH4(+). The enzyme catalyses sarcosine + O2 + H2O = methylamine + glyoxylate + H2O2. The protein operates within cofactor biosynthesis; thiamine diphosphate biosynthesis. Functionally, catalyzes the oxidation of glycine, leading to glyoxyl imine and hydrogen peroxide as primary products; glyoxyl imine is used for the biosynthesis of the thiazole ring of thiamine. Otherwise, glyoxyl imine is spontaneously hydrolyzed in water to produce glyoxylate and ammonia. Can also use sarcosine (N-methylglycine) as substrate, and, to a lesser extent, N-ethylglycine and D-proline. Has no activity towards other amino-acids D-Asp, D-Glu, D-Gln, D-His, D-Leu, D-Lys, D-ornithine, D-Trp, D-Val, L-Ala, L-Asp, L-Glu, L-His, L-Leu, L-Lys, L-Met and L-Pro. This Pseudomonas putida (strain ATCC 47054 / DSM 6125 / CFBP 8728 / NCIMB 11950 / KT2440) protein is Glycine oxidase.